A 461-amino-acid polypeptide reads, in one-letter code: Cysteine--tRNA ligase (461 aa).

C28 is a Zn(2+) binding site. The 'HIGH' region motif lies at 30-40 (ITVYDLCHIGH). Positions 209, 234, and 238 each coordinate Zn(2+). A 'KMSKS' region motif is present at residues 266-270 (KMSKS). Residue K269 participates in ATP binding.

It belongs to the class-I aminoacyl-tRNA synthetase family. In terms of assembly, monomer. It depends on Zn(2+) as a cofactor.

It is found in the cytoplasm. The enzyme catalyses tRNA(Cys) + L-cysteine + ATP = L-cysteinyl-tRNA(Cys) + AMP + diphosphate. This Escherichia coli O17:K52:H18 (strain UMN026 / ExPEC) protein is Cysteine--tRNA ligase.